Reading from the N-terminus, the 282-residue chain is uncharacterized protein (282 aa).

The HTH rpiR-type domain occupies 4–80; sequence STLTSKLESL…VDYLSDEKQY (77 aa). Residues 40-59 constitute a DNA-binding region (H-T-H motif); that stretch reads VAELAQAAGVSSASVIRFTR. Residues 125–265 form the SIS domain; the sequence is IAQKIVEAKR…FFKYLTLTNE (141 aa).

This is an uncharacterized protein from Providencia stuartii.